Reading from the N-terminus, the 211-residue chain is Thymidylate kinase (211 aa).

10–17 (GVEGCGKT) contacts ATP.

The protein belongs to the thymidylate kinase family.

The catalysed reaction is dTMP + ATP = dTDP + ADP. Functionally, phosphorylation of dTMP to form dTDP in both de novo and salvage pathways of dTTP synthesis. The polypeptide is Thymidylate kinase (Trichormus variabilis (strain ATCC 29413 / PCC 7937) (Anabaena variabilis)).